The following is a 124-amino-acid chain: MIGIDIVSISRISKIYTKFGDKFLDKILSGNEQNSVLNLNYNLKLERLAGIYAAKEAFAKALGVGISADFGFLDVEILKNDRGAPFLEIAPCIIKKFNIKNADVSITHDGGFAISAVILEMSKF.

Mg(2+) contacts are provided by D5 and E56.

This sequence belongs to the P-Pant transferase superfamily. AcpS family. Mg(2+) serves as cofactor.

Its subcellular location is the cytoplasm. The enzyme catalyses apo-[ACP] + CoA = holo-[ACP] + adenosine 3',5'-bisphosphate + H(+). In terms of biological role, transfers the 4'-phosphopantetheine moiety from coenzyme A to a Ser of acyl-carrier-protein. The chain is Holo-[acyl-carrier-protein] synthase from Campylobacter hominis (strain ATCC BAA-381 / DSM 21671 / CCUG 45161 / LMG 19568 / NCTC 13146 / CH001A).